Consider the following 287-residue polypeptide: uncharacterized protein (287 aa).

An N-terminal signal peptide occupies residues 1 to 31 (MLGSMALKLRKWIWASIPSLALILSSCSALV).

Belongs to the MG439/MG440 family.

This is an uncharacterized protein from Mycoplasma pneumoniae (strain ATCC 29342 / M129 / Subtype 1) (Mycoplasmoides pneumoniae).